The following is a 273-amino-acid chain: SPRY domain-containing SOCS box protein 1 (273 aa).

The residue at position 31 (Y31) is a Phosphotyrosine; by MET. Residues 33-231 form the B30.2/SPRY domain; it reads KPTRLDLLLD…IRMRYLNGLD (199 aa). The SOCS box domain maps to 232–273; the sequence is PEPLPLMDLCRRSVRLALGRERLGEIHTLPLPASLKAYLLYQ.

Belongs to the SPSB family. Component of the probable ECS(SPSB1) E3 ubiquitin-protein ligase complex which contains CUL5, RNF7/RBX2, Elongin BC complex and SPSB1. Interacts with CUL5, RNF7, ELOB and ELOC. Directly interacts with MET tyrosine kinase domain in the presence and in the absence of HGF, however HGF treatment has a positive effect on this interaction. When phosphorylated, interacts with RASA1 without affecting its stability. Interacts (via B30.2/SPRY domain) with PAWR; this interaction is direct and occurs in association with the Elongin BC complex. Interacts with NOS2. Interacts with EPHB2.

Its subcellular location is the cytoplasm. It localises to the cytosol. Its pathway is protein modification; protein ubiquitination. Substrate recognition component of a SCF-like ECS (Elongin BC-CUL2/5-SOCS-box protein) E3 ubiquitin-protein ligase complex which mediates the ubiquitination and subsequent proteasomal degradation of target proteins. Negatively regulates nitric oxide (NO) production and limits cellular toxicity in activated macrophages by mediating the ubiquitination and proteasomal degradation of NOS2. Acts as a bridge which links NOS2 with the ECS E3 ubiquitin ligase complex components ELOC and CUL5. This chain is SPRY domain-containing SOCS box protein 1 (SPSB1), found in Homo sapiens (Human).